A 435-amino-acid polypeptide reads, in one-letter code: tRNA modification GTPase MnmE (435 aa).

The (6S)-5-formyl-5,6,7,8-tetrahydrofolate site is built by Arg-24, Glu-85, and Arg-124. The TrmE-type G domain occupies 220–361 (GLVFTIVGAP…LRTALAERAR (142 aa)). Asn-230 contacts K(+). GTP contacts are provided by residues 230–235 (NVGKSS), 249–255 (SAIAGTT), and 274–277 (DTAG). Residue Ser-234 coordinates Mg(2+). Residues Ser-249, Ile-251, and Thr-254 each contribute to the K(+) site. Thr-255 is a binding site for Mg(2+). Lys-435 serves as a coordination point for (6S)-5-formyl-5,6,7,8-tetrahydrofolate.

Belongs to the TRAFAC class TrmE-Era-EngA-EngB-Septin-like GTPase superfamily. TrmE GTPase family. As to quaternary structure, homodimer. Heterotetramer of two MnmE and two MnmG subunits. K(+) serves as cofactor.

It localises to the cytoplasm. In terms of biological role, exhibits a very high intrinsic GTPase hydrolysis rate. Involved in the addition of a carboxymethylaminomethyl (cmnm) group at the wobble position (U34) of certain tRNAs, forming tRNA-cmnm(5)s(2)U34. This is tRNA modification GTPase MnmE from Gluconacetobacter diazotrophicus (strain ATCC 49037 / DSM 5601 / CCUG 37298 / CIP 103539 / LMG 7603 / PAl5).